A 161-amino-acid polypeptide reads, in one-letter code: Regulator of ribonuclease activity A (161 aa).

Belongs to the RraA family. As to quaternary structure, homotrimer. Binds to both RNA-binding sites in the C-terminal region of Rne and to RhlB.

It is found in the cytoplasm. Its function is as follows. Globally modulates RNA abundance by binding to RNase E (Rne) and regulating its endonucleolytic activity. Can modulate Rne action in a substrate-dependent manner by altering the composition of the degradosome. Modulates RNA-binding and helicase activities of the degradosome. The polypeptide is Regulator of ribonuclease activity A (Shigella flexneri serotype 5b (strain 8401)).